A 331-amino-acid polypeptide reads, in one-letter code: 5-dehydro-2-deoxygluconokinase (331 aa).

It belongs to the carbohydrate kinase PfkB family.

The enzyme catalyses 5-dehydro-2-deoxy-D-gluconate + ATP = 6-phospho-5-dehydro-2-deoxy-D-gluconate + ADP + H(+). Its pathway is polyol metabolism; myo-inositol degradation into acetyl-CoA; acetyl-CoA from myo-inositol: step 5/7. Its function is as follows. Catalyzes the phosphorylation of 5-dehydro-2-deoxy-D-gluconate (2-deoxy-5-keto-D-gluconate or DKG) to 6-phospho-5-dehydro-2-deoxy-D-gluconate (DKGP). The protein is 5-dehydro-2-deoxygluconokinase of Halalkalibacterium halodurans (strain ATCC BAA-125 / DSM 18197 / FERM 7344 / JCM 9153 / C-125) (Bacillus halodurans).